We begin with the raw amino-acid sequence, 506 residues long: Anaerobic nitric oxide reductase transcription regulator NorR (506 aa).

4-aspartylphosphate is present on aspartate 57. A Sigma-54 factor interaction domain is found at 187 to 416 (MIGLSPAMTQ…LEHAIHRAVV (230 aa)). Residues 215–222 (GETGTGKE) and 278–287 (ADNGTLFLDE) each bind ATP. The H-T-H motif DNA-binding region spans 481 to 500 (WAASARALETDVANLHRLAK).

It functions in the pathway nitrogen metabolism; nitric oxide reduction. Required for the expression of anaerobic nitric oxide (NO) reductase, acts as a transcriptional activator for at least the norVW operon. Activation also requires sigma-54. This is Anaerobic nitric oxide reductase transcription regulator NorR from Salmonella schwarzengrund (strain CVM19633).